Reading from the N-terminus, the 388-residue chain is Chorismate synthase (388 aa).

NADP(+) is bound by residues arginine 39 and arginine 45. FMN contacts are provided by residues 130–132 (RSS), 251–252 (NA), glycine 296, 311–315 (KPIPT), and arginine 337.

The protein belongs to the chorismate synthase family. As to quaternary structure, homotetramer. FMNH2 is required as a cofactor.

It catalyses the reaction 5-O-(1-carboxyvinyl)-3-phosphoshikimate = chorismate + phosphate. It participates in metabolic intermediate biosynthesis; chorismate biosynthesis; chorismate from D-erythrose 4-phosphate and phosphoenolpyruvate: step 7/7. Its function is as follows. Catalyzes the anti-1,4-elimination of the C-3 phosphate and the C-6 proR hydrogen from 5-enolpyruvylshikimate-3-phosphate (EPSP) to yield chorismate, which is the branch point compound that serves as the starting substrate for the three terminal pathways of aromatic amino acid biosynthesis. This reaction introduces a second double bond into the aromatic ring system. This is Chorismate synthase from Streptococcus pneumoniae (strain ATCC 700669 / Spain 23F-1).